We begin with the raw amino-acid sequence, 251 residues long: Fibroblast growth factor-binding protein 1 (251 aa).

Positions 1–20 (MRLHSLILLSFLLLATQAFS) are cleaved as a signal peptide. Positions 25-62 (KRAKNAPHSTAEEGVEGSAPSLGKAQNKQRSRTSKSLT) are disordered. Disulfide bonds link Cys-74–Cys-91, Cys-100–Cys-133, and Cys-109–Cys-145. A disordered region spans residues 160–189 (NARGNTKPRKEKAEVSAREHNKVQEAVSTE). Over residues 170-182 (EKAEVSAREHNKV) the composition is skewed to basic and acidic residues. Ser-175 carries O-linked (GalNAc...) serine glycosylation. The interval 210-251 (RDPECLEDPDVLNQRKTALEFCGESWSSICTFFLNMLQATSC) is sufficient for interaction with FGF2 and FGF2-induced effects. 2 disulfide bridges follow: Cys-214-Cys-251 and Cys-231-Cys-239.

It belongs to the fibroblast growth factor-binding protein family. Found in a complex with FGFBP1, FGF1 and FGF2. Interacts with FGF1, FGF7, FGF10, FGF22 and HSPG2. Interacts with FGF2. Expressed in intestine, ovary, lung, placenta and normal and wounded skin.

It localises to the secreted. The protein resides in the extracellular space. It is found in the cell membrane. In terms of biological role, acts as a carrier protein that releases fibroblast-binding factors (FGFs) from the extracellular matrix (EM) storage and thus enhances the mitogenic activity of FGFs. Enhances FGF2 signaling during tissue repair, angiogenesis and in tumor growth. In Mus musculus (Mouse), this protein is Fibroblast growth factor-binding protein 1 (Fgfbp1).